A 384-amino-acid polypeptide reads, in one-letter code: Alanine racemase (384 aa).

K42 acts as the Proton acceptor; specific for D-alanine in catalysis. N6-(pyridoxal phosphate)lysine is present on K42. Residue R140 participates in substrate binding. Y271 (proton acceptor; specific for L-alanine) is an active-site residue. M319 is a binding site for substrate.

The protein belongs to the alanine racemase family. In terms of assembly, homodimer. It depends on pyridoxal 5'-phosphate as a cofactor.

It catalyses the reaction L-alanine = D-alanine. It participates in amino-acid biosynthesis; D-alanine biosynthesis; D-alanine from L-alanine: step 1/1. Its function is as follows. Catalyzes the interconversion of L-alanine and D-alanine. The protein is Alanine racemase (alr) of Mycobacterium tuberculosis (strain CDC 1551 / Oshkosh).